A 116-amino-acid polypeptide reads, in one-letter code: Evasin P1180 (116 aa).

The signal sequence occupies residues 1 to 25 (MARNWSFRVIFVSAMWCALLKFATL). 4 disulfides stabilise this stretch: cysteine 38–cysteine 58, cysteine 54–cysteine 95, cysteine 71–cysteine 100, and cysteine 90–cysteine 109. N-linked (GlcNAc...) asparagine glycosylation is found at asparagine 45, asparagine 73, and asparagine 104.

The protein localises to the secreted. Functionally, salivary chemokine-binding protein which binds to host chemokines CCL2, CCL3, CCL4, CCL8 and CCL18. The protein is Evasin P1180 of Amblyomma triste (Neotropical tick).